The chain runs to 146 residues: 3-dehydroquinate dehydratase (146 aa).

Tyrosine 24 serves as the catalytic Proton acceptor. Substrate is bound by residues asparagine 75, histidine 81, and aspartate 88. The Proton donor role is filled by histidine 101. Substrate is bound by residues 102–103 (LS) and arginine 112.

Belongs to the type-II 3-dehydroquinase family. As to quaternary structure, homododecamer.

The catalysed reaction is 3-dehydroquinate = 3-dehydroshikimate + H2O. The protein operates within metabolic intermediate biosynthesis; chorismate biosynthesis; chorismate from D-erythrose 4-phosphate and phosphoenolpyruvate: step 3/7. Catalyzes a trans-dehydration via an enolate intermediate. The chain is 3-dehydroquinate dehydratase from Caulobacter vibrioides (strain ATCC 19089 / CIP 103742 / CB 15) (Caulobacter crescentus).